Consider the following 226-residue polypeptide: Orotate phosphoribosyltransferase (226 aa).

5-phospho-alpha-D-ribose 1-diphosphate is bound at residue K30. F38–F39 contributes to the orotate binding site. Residues Y76–K77, R106, K107, K110, H112, and D132–A140 each bind 5-phospho-alpha-D-ribose 1-diphosphate. Positions 136 and 164 each coordinate orotate.

The protein belongs to the purine/pyrimidine phosphoribosyltransferase family. PyrE subfamily. As to quaternary structure, homodimer.

The catalysed reaction is orotidine 5'-phosphate + diphosphate = orotate + 5-phospho-alpha-D-ribose 1-diphosphate. It functions in the pathway pyrimidine metabolism; UMP biosynthesis via de novo pathway; UMP from orotate: step 1/2. Its function is as follows. Catalyzes the transfer of a ribosyl phosphate group from 5-phosphoribose 1-diphosphate to orotate, leading to the formation of orotidine monophosphate (OMP). The protein is Orotate phosphoribosyltransferase (URA5) of Kluyveromyces lactis (strain ATCC 8585 / CBS 2359 / DSM 70799 / NBRC 1267 / NRRL Y-1140 / WM37) (Yeast).